Consider the following 98-residue polypeptide: Aspartyl/glutamyl-tRNA(Asn/Gln) amidotransferase subunit C (98 aa).

The interval 76-98 is disordered; sequence QVLSGAPDAEDGRFKVPAILEED.

It belongs to the GatC family. Heterotrimer of A, B and C subunits.

It carries out the reaction L-glutamyl-tRNA(Gln) + L-glutamine + ATP + H2O = L-glutaminyl-tRNA(Gln) + L-glutamate + ADP + phosphate + H(+). The catalysed reaction is L-aspartyl-tRNA(Asn) + L-glutamine + ATP + H2O = L-asparaginyl-tRNA(Asn) + L-glutamate + ADP + phosphate + 2 H(+). Its function is as follows. Allows the formation of correctly charged Asn-tRNA(Asn) or Gln-tRNA(Gln) through the transamidation of misacylated Asp-tRNA(Asn) or Glu-tRNA(Gln) in organisms which lack either or both of asparaginyl-tRNA or glutaminyl-tRNA synthetases. The reaction takes place in the presence of glutamine and ATP through an activated phospho-Asp-tRNA(Asn) or phospho-Glu-tRNA(Gln). This chain is Aspartyl/glutamyl-tRNA(Asn/Gln) amidotransferase subunit C, found in Renibacterium salmoninarum (strain ATCC 33209 / DSM 20767 / JCM 11484 / NBRC 15589 / NCIMB 2235).